A 66-amino-acid polypeptide reads, in one-letter code: uncharacterized protein (66 aa).

Residues 5–59 (LKYYRALHNLTQEDLAKKLGVSRQTIIAIEKGKYDPSLKLAFKIAKFFGVKIEDI) enclose the HTH cro/C1-type domain. The H-T-H motif DNA-binding region spans 16–35 (QEDLAKKLGVSRQTIIAIEK).

This is an uncharacterized protein from Methanocaldococcus jannaschii (strain ATCC 43067 / DSM 2661 / JAL-1 / JCM 10045 / NBRC 100440) (Methanococcus jannaschii).